The chain runs to 128 residues: Saitohin (128 aa).

The disordered stretch occupies residues 77-128 (SYSSEESSRNGAEQGRQLSIEGPFQGQNCPSHPAAALPLPMRGESQATSCQV).

As to quaternary structure, interacts with PRDX6.

The protein resides in the cytoplasm. Its subcellular location is the nucleus. The sequence is that of Saitohin (STH) from Gorilla gorilla gorilla (Western lowland gorilla).